Here is a 363-residue protein sequence, read N- to C-terminus: Peptide chain release factor 1 (363 aa).

Gln-237 carries the N5-methylglutamine modification. The span at 284 to 296 (EDEKRRSAEESTR) shows a compositional bias: basic and acidic residues. The segment at 284-306 (EDEKRRSAEESTRRSLVASGDRS) is disordered.

The protein belongs to the prokaryotic/mitochondrial release factor family. In terms of processing, methylated by PrmC. Methylation increases the termination efficiency of RF1.

The protein localises to the cytoplasm. Peptide chain release factor 1 directs the termination of translation in response to the peptide chain termination codons UAG and UAA. This chain is Peptide chain release factor 1, found in Shewanella oneidensis (strain ATCC 700550 / JCM 31522 / CIP 106686 / LMG 19005 / NCIMB 14063 / MR-1).